Reading from the N-terminus, the 92-residue chain is Small ribosomal subunit protein uS19 (92 aa).

It belongs to the universal ribosomal protein uS19 family.

Protein S19 forms a complex with S13 that binds strongly to the 16S ribosomal RNA. This chain is Small ribosomal subunit protein uS19, found in Bacillus cereus (strain B4264).